Here is a 401-residue protein sequence, read N- to C-terminus: Exodeoxyribonuclease 7 large subunit (401 aa).

This sequence belongs to the XseA family. Heterooligomer composed of large and small subunits.

It is found in the cytoplasm. It catalyses the reaction Exonucleolytic cleavage in either 5'- to 3'- or 3'- to 5'-direction to yield nucleoside 5'-phosphates.. In terms of biological role, bidirectionally degrades single-stranded DNA into large acid-insoluble oligonucleotides, which are then degraded further into small acid-soluble oligonucleotides. The chain is Exodeoxyribonuclease 7 large subunit from Thermoanaerobacter sp. (strain X514).